Consider the following 188-residue polypeptide: Elongation factor P 1 (188 aa).

Belongs to the elongation factor P family.

The protein resides in the cytoplasm. Its pathway is protein biosynthesis; polypeptide chain elongation. Functionally, involved in peptide bond synthesis. Stimulates efficient translation and peptide-bond synthesis on native or reconstituted 70S ribosomes in vitro. Probably functions indirectly by altering the affinity of the ribosome for aminoacyl-tRNA, thus increasing their reactivity as acceptors for peptidyl transferase. The protein is Elongation factor P 1 (efp1) of Porphyromonas gingivalis (strain ATCC BAA-308 / W83).